The chain runs to 185 residues: Ribosome-recycling factor (185 aa).

Belongs to the RRF family.

It is found in the cytoplasm. Responsible for the release of ribosomes from messenger RNA at the termination of protein biosynthesis. May increase the efficiency of translation by recycling ribosomes from one round of translation to another. The sequence is that of Ribosome-recycling factor from Bacillus cereus (strain ATCC 10987 / NRS 248).